Reading from the N-terminus, the 1179-residue chain is Integrin alpha-7 (1179 aa).

The N-terminal stretch at 1–33 is a signal peptide; sequence MARIPRCDFLRPPGIYYLITSLLAGLFLPPAIA. Over 34 to 1076 the chain is Extracellular; the sequence is FNLDVMGAIR…YLDPMAVVVE (1043 aa). FG-GAP repeat units lie at residues 38–103, 110–175, 185–238, 292–349, 350–411, 412–467, and 471–530; these read VMGA…ETDC, RGAN…IRDE, EGRP…SPDL, DRLT…ATRL, IPEV…HWAD, ISPL…GVVV, and QVLE…IDPR. N86 carries an N-linked (GlcNAc...) asparagine glycan. Cystine bridges form between C94-C103, C140-C163, and C184-C197. The Ca(2+) site is built by D372, N374, D376, D380, D434, N436, D438, D442, D492, D494, N496, Y498, and D500. Cystine bridges form between C539–C546, C552–C615, C681–C687, C781–C792, C939–C993, and C999–C1004. N784 carries N-linked (GlcNAc...) asparagine glycosylation. Over residues 952–961 the composition is skewed to basic and acidic residues; it reads SRDRRRRELG. Residues 952 to 978 are disordered; the sequence is SRDRRRRELGQPEPQEPPEKVEPSTSW. Residue N988 is glycosylated (N-linked (GlcNAc...) asparagine). N-linked (GlcNAc...) asparagine glycans are attached at residues N1023 and N1043. The helical transmembrane segment at 1077-1102 threads the bilayer; it reads GVPWWVILLGVLAGLLVLALLVLLLW. Topologically, residues 1103–1179 are cytoplasmic; that stretch reads KLGFFKRAKH…PDGHPVPATA (77 aa). Residues 1105 to 1109 carry the GFFKR motif motif; the sequence is GFFKR. The segment at 1134 to 1153 is disordered; that stretch reads KEEKTGTIQRSNWGNSQWEG. A compositionally biased stretch (polar residues) spans 1139–1152; that stretch reads GTIQRSNWGNSQWE. A run of 3 repeats spans residues 1155–1158, 1163–1166, and 1171–1174. The interval 1155–1174 is 3 X 4 AA repeats of D-X-H-P; that stretch reads DAHPILAADWHPELGPDGHP.

Belongs to the integrin alpha chain family. Heterodimer of an alpha and a beta subunit. The alpha subunit is composed of a heavy and a light chain linked by a disulfide bond. Alpha-7 associates with beta-1. Interacts with COMP. Interacts (via C-terminus intracellular tail region) with CIB1; the interaction is stabilized/increased in a calcium- and magnesium-dependent manner. ADP-ribosylated on at least two sites of the extracellular domain in skeletal myotubes (in vitro). Post-translationally, no proteolytic cleavage to produce the 70 kDa form is seen due to the presence of a Gly instead of an arginine residue at position 647. As to expression, isoforms containing segment X2 are found in adult heart, lung and skeletal muscle. Isoforms containing segment X1 are expressed in adult heart, lung and in proliferating skeletal myoblasts but not in adult skeletal muscle. Isoforms containing segment a are exclusively found in skeletal muscle. Isoforms containing segment B are widely expressed. In muscle fibers isoforms containing segment A and B are expressed at myotendinous and neuromuscular junctions; isoforms containing segment C are expressed at neuromuscular junctions and at extrasynaptic sites.

It localises to the membrane. In terms of biological role, integrin alpha-7/beta-1 is the primary laminin receptor on skeletal myoblasts and adult myofibers. During myogenic differentiation, it may induce changes in the shape and mobility of myoblasts, and facilitate their localization at laminin-rich sites of secondary fiber formation. Involved in the maintenance of the myofibers cytoarchitecture as well as for their anchorage, viability and functional integrity. Mice carrying a ITGA7 null allele are viable and fertile, but show progressive muscular dystrophy starting soon after birth, but with a distinct variability in different muscle types. Required to promote contractile phenotype acquisition in differentiated airway smooth muscle (ASM) cells. Acts as a Schwann cell receptor for laminin-2. Acts as a receptor of COMP and mediates its effect on vascular smooth muscle cells (VSMCs) maturation. The sequence is that of Integrin alpha-7 (Itga7) from Mus musculus (Mouse).